The primary structure comprises 370 residues: Probable endopolygalacturonase A (370 aa).

The signal sequence occupies residues 1–19 (MPSAKPLFCLATLAGAALA). Residues 20–32 (APAPSRVSDFTKR) constitute a propeptide that is removed on maturation. Cys-35 and Cys-50 are joined by a disulfide. PbH1 repeat units follow at residues 162-192 (SDNL…DISE), 193-214 (STYI…AINS), 215-235 (GENI…SIGS), 244-265 (VKNV…RIKT), 273-295 (VEDI…VIEQ), and 307-352 (SNGV…DITG). The active-site Proton donor is Asp-207. Cys-209 and Cys-225 are disulfide-bonded. Residue His-229 is part of the active site. Asn-246 is a glycosylation site (N-linked (GlcNAc...) asparagine). 2 cysteine pairs are disulfide-bonded: Cys-335/Cys-340 and Cys-359/Cys-368.

It belongs to the glycosyl hydrolase 28 family.

The protein localises to the secreted. It catalyses the reaction (1,4-alpha-D-galacturonosyl)n+m + H2O = (1,4-alpha-D-galacturonosyl)n + (1,4-alpha-D-galacturonosyl)m.. In terms of biological role, involved in maceration and soft-rotting of plant tissue. Hydrolyzes the 1,4-alpha glycosidic bonds of de-esterified pectate in the smooth region of the plant cell wall. The protein is Probable endopolygalacturonase A (pgaA) of Aspergillus niger (strain ATCC MYA-4892 / CBS 513.88 / FGSC A1513).